Here is a 498-residue protein sequence, read N- to C-terminus: Excisase C (498 aa).

Residues 263-446 (KIIYSFDLFE…FGIENRKKAF (184 aa)) enclose the Tyr recombinase domain. Residues R306, K336, R401, and H424 contribute to the active site. The active-site O-(3'-phospho-DNA)-tyrosine intermediate is the Y433.

Belongs to the XisA/XisC recombinase family.

In terms of biological role, essential for DNA excision. Site specific recombinase necessary for the excision of the 10.5 kb hupL element during heterocyst differentiation. This is Excisase C (xisC) from Nostoc sp. (strain PCC 7120 / SAG 25.82 / UTEX 2576).